The chain runs to 219 residues: Ribosome hibernation promotion factor (219 aa).

The protein belongs to the HPF/YfiA ribosome-associated protein family. Long HPF subfamily. In terms of assembly, interacts with 100S ribosomes.

It is found in the cytoplasm. Functionally, required for dimerization of active 70S ribosomes into 100S ribosomes in stationary phase; 100S ribosomes are translationally inactive and sometimes present during exponential growth. This is Ribosome hibernation promotion factor from Mycobacterium tuberculosis (strain ATCC 25618 / H37Rv).